The following is a 468-amino-acid chain: Putative BTB/POZ domain and WD-repeat protein R154 (468 aa).

The BTB domain occupies 14–85 (SDLQLIVEDS…FYGIDDKLPE (72 aa)). WD repeat units lie at residues 194–233 (HHSE…IIFN), 354–398 (DEIG…LVKS), and 401–440 (LFDV…IIYT).

The protein belongs to the mimivirus BTB/WD family.

This is Putative BTB/POZ domain and WD-repeat protein R154 from Acanthamoeba polyphaga (Amoeba).